Here is a 231-residue protein sequence, read N- to C-terminus: Uracil phosphoribosyltransferase (231 aa).

A GTP-binding site is contributed by 38–42 (KGLVR). Residues R87, R112, and 140–148 (DPMIATGST) contribute to the 5-phospho-alpha-D-ribose 1-diphosphate site. Uracil-binding positions include I203 and 208–210 (GDA). D209 serves as a coordination point for 5-phospho-alpha-D-ribose 1-diphosphate.

This sequence belongs to the UPRTase family. Mg(2+) serves as cofactor.

The enzyme catalyses UMP + diphosphate = 5-phospho-alpha-D-ribose 1-diphosphate + uracil. The protein operates within pyrimidine metabolism; UMP biosynthesis via salvage pathway; UMP from uracil: step 1/1. Its activity is regulated as follows. Allosterically activated by GTP. Catalyzes the conversion of uracil and 5-phospho-alpha-D-ribose 1-diphosphate (PRPP) to UMP and diphosphate. The chain is Uracil phosphoribosyltransferase from Methanococcus maripaludis (strain C7 / ATCC BAA-1331).